A 392-amino-acid chain; its full sequence is AAA-ATPase At5g17750 (392 aa).

A helical membrane pass occupies residues 13–35; it reads MFSTYASLAGYIMMIKPMIHTII. 227–234 contacts ATP; the sequence is GPPGTGKS.

This sequence belongs to the AAA ATPase family. BCS1 subfamily. The cofactor is Mg(2+).

Its subcellular location is the membrane. It catalyses the reaction ATP + H2O = ADP + phosphate + H(+). This Arabidopsis thaliana (Mouse-ear cress) protein is AAA-ATPase At5g17750.